The sequence spans 340 residues: Coproporphyrin III ferrochelatase (340 aa).

The Fe-coproporphyrin III site is built by Ser52 and Tyr116. Residues His172 and Glu255 each contribute to the Fe(2+) site.

Belongs to the ferrochelatase family.

Its subcellular location is the cytoplasm. The enzyme catalyses Fe-coproporphyrin III + 2 H(+) = coproporphyrin III + Fe(2+). Its pathway is porphyrin-containing compound metabolism; protoheme biosynthesis. Its function is as follows. Involved in coproporphyrin-dependent heme b biosynthesis. Catalyzes the insertion of ferrous iron into coproporphyrin III to form Fe-coproporphyrin III. This is Coproporphyrin III ferrochelatase from Mycobacterium ulcerans (strain Agy99).